Consider the following 64-residue polypeptide: UPF0337 protein SH2043 (64 aa).

A disordered region spans residues 1–64 (MAEDKFEQAK…DKVKGNNDNK (64 aa)). Residues 22–64 (DNKDLEKEGQNDKASGKAKEAVENVKNKANDLIDKVKGNNDNK) show a composition bias toward basic and acidic residues.

Belongs to the UPF0337 (CsbD) family.

This Staphylococcus haemolyticus (strain JCSC1435) protein is UPF0337 protein SH2043.